The chain runs to 144 residues: Maximins 9/H3 (144 aa).

A signal peptide spans 1–18 (MNFKYIVAVSFLIASAYA). Residues 19–43 (RSVKNDEQSLSQRDVLEEESLREIR) constitute a propeptide that is removed on maturation. Residue tyrosine 70 is modified to Tyrosine amide. Positions 74-123 (TAEEHEVMKRLEAIMRDLDSLDHPEEASERETRGFNQDEIANLFTKKEKR) are excised as a propeptide. An Isoleucine amide modification is found at isoleucine 143.

This sequence belongs to the bombinin family. In terms of tissue distribution, expressed by the skin glands.

It is found in the secreted. Functionally, maximin-9 shows antimicrobial activity against bacteria and against the fungus C.albicans. It has little hemolytic activity. In terms of biological role, maximin-H3 shows antibacterial activity against both Gram-positive and Gram-negative bacteria. It also shows antimicrobial activity against the fungus C.albicans. Shows strong hemolytic activity. The polypeptide is Maximins 9/H3 (Bombina maxima (Giant fire-bellied toad)).